An 81-amino-acid chain; its full sequence is Cytochrome c6 (81 aa).

Heme c is bound by residues Cys10, Cys13, His14, and Met54.

This sequence belongs to the cytochrome c family. PetJ subfamily. As to quaternary structure, monomer. In terms of processing, binds 1 heme c group covalently per subunit.

The protein localises to the cellular thylakoid lumen. Functionally, functions as an electron carrier between membrane-bound cytochrome b6-f and photosystem I in oxygenic photosynthesis. This is Cytochrome c6 (petJ) from Microcystis aeruginosa.